We begin with the raw amino-acid sequence, 132 residues long: Fertilization-influencing membrane protein (132 aa).

The chain crosses the membrane as a helical span at residues 100-120; it reads PGLFHHILVGLLVVAFFFLLF.

As to expression, testis-specific.

The protein resides in the cell membrane. Functionally, may play a role in sperm-oocyte fusion during fertilization. In Homo sapiens (Human), this protein is Fertilization-influencing membrane protein.